The primary structure comprises 634 residues: UPF0329 protein ECU07_1850/ECU10_0050 (634 aa).

Basic and acidic residues-rich tracts occupy residues 354–365 and 397–407; these read REEREKREESKG and GESKEEDRGEE. Residues 354–438 form a disordered region; that stretch reads REEREKREES…KGSGEKRISE (85 aa). Residues 408-417 show a composition bias toward acidic residues; the sequence is GGVEAEDPLE.

This sequence belongs to the UPF0329 family.

The chain is UPF0329 protein ECU07_1850/ECU10_0050 from Encephalitozoon cuniculi (strain GB-M1) (Microsporidian parasite).